Reading from the N-terminus, the 106-residue chain is uncharacterized protein (106 aa).

The protein belongs to the HesB/IscA family.

This is an uncharacterized protein from Sinorhizobium fredii (strain NBRC 101917 / NGR234).